The primary structure comprises 230 residues: Voltage-gated hydrogen channel 1 (230 aa).

The Cytoplasmic portion of the chain corresponds to 1–58 (MAGCLRHFTSVGDDTKKREWKQEDVEVAYEEPLKNTPHPFIASYSFRGALKWLLSSHK). The helical transmembrane segment at 59–79 (FQIVIICLVILDALFVLVEVL) threads the bilayer. Residues 80 to 96 (LDLELLAEKVDHIIPEI) lie on the Extracellular side of the membrane. Residues 97–119 (FHYLSISVLTFFILEIAGKLYAF) traverse the membrane as a helical segment. At 120 to 127 (RLEFFHHK) the chain is on the cytoplasmic side. The chain crosses the membrane as a helical span at residues 128-148 (FEVFDAAIVVISFIIDIVYIS). Residues 149–155 (REDIFNA) lie on the Extracellular side of the membrane. The helical transmembrane segment at 156–176 (VGLLILLRLWRVARIVNGVIV) threads the bilayer. The Cytoplasmic portion of the chain corresponds to 177 to 230 (SVKTRAEEKMHKLKEQKGSLLEKVAQLEQQCAQQEQEIGRLHKLLQEHNVFPAS). Residues 178 to 225 (VKTRAEEKMHKLKEQKGSLLEKVAQLEQQCAQQEQEIGRLHKLLQEHN) are a coiled coil.

This sequence belongs to the hydrogen channel family. As to quaternary structure, homodimer.

It is found in the membrane. Its subcellular location is the cell membrane. Mediates the voltage-dependent proton permeability of excitable membranes. Forms a proton-selective channel through which protons may pass in accordance with their electrochemical gradient. The polypeptide is Voltage-gated hydrogen channel 1 (hvcn1) (Xenopus laevis (African clawed frog)).